The sequence spans 44 residues: Photosystem I reaction center subunit IX (44 aa).

A helical membrane pass occupies residues 7-27 (YLSVAPVLATLWFGSLAGLLI).

The protein belongs to the PsaJ family.

The protein localises to the plastid. Its subcellular location is the chloroplast thylakoid membrane. May help in the organization of the PsaE and PsaF subunits. This chain is Photosystem I reaction center subunit IX, found in Illicium oligandrum (Star anise).